A 308-amino-acid chain; its full sequence is Uridine diphosphate glucose pyrophosphatase NUDT22 (308 aa).

The substrate site is built by Phe56, Tyr86, Arg138, Ala143, Asp150, His155, and Glu157. The Nudix hydrolase domain occupies 117-284; the sequence is ADPLGVGAAL…KGAILLYNRH (168 aa). The Nudix box signature appears at 174–195; it reads GLLVVRELFSSVLQEICDEVNL. Residues Glu188 and Glu192 each contribute to the Mg(2+) site. A substrate-binding site is contributed by Ser273.

The protein belongs to the Nudix hydrolase family. Requires Mg(2+) as cofactor.

The catalysed reaction is UDP-sugar + H2O = UMP + alpha-D-aldose 1-phosphate.. Its function is as follows. Hydrolyzes UDP-glucose to glucose 1-phosphate and UMP and UDP-galactose to galactose 1-phosphate and UMP. Preferred substrate is UDP-glucose. The polypeptide is Uridine diphosphate glucose pyrophosphatase NUDT22 (Nudt22) (Mus musculus (Mouse)).